Here is a 160-residue protein sequence, read N- to C-terminus: Small ribosomal subunit protein bS6 (160 aa).

The protein belongs to the bacterial ribosomal protein bS6 family.

Functionally, binds together with bS18 to 16S ribosomal RNA. The sequence is that of Small ribosomal subunit protein bS6 from Ureaplasma parvum serovar 3 (strain ATCC 27815 / 27 / NCTC 11736).